A 1087-amino-acid polypeptide reads, in one-letter code: DNA polymerase II large subunit (1087 aa).

Belongs to the archaeal DNA polymerase II family. As to quaternary structure, heterodimer of a large subunit and a small subunit.

The catalysed reaction is DNA(n) + a 2'-deoxyribonucleoside 5'-triphosphate = DNA(n+1) + diphosphate. It carries out the reaction Exonucleolytic cleavage in the 3'- to 5'-direction to yield nucleoside 5'-phosphates.. Its function is as follows. Possesses two activities: a DNA synthesis (polymerase) and an exonucleolytic activity that degrades single-stranded DNA in the 3'- to 5'-direction. Has a template-primer preference which is characteristic of a replicative DNA polymerase. This is DNA polymerase II large subunit (polC) from Thermoplasma acidophilum (strain ATCC 25905 / DSM 1728 / JCM 9062 / NBRC 15155 / AMRC-C165).